The sequence spans 608 residues: Glutamine--fructose-6-phosphate aminotransferase [isomerizing] (608 aa).

Residue Cys-2 is the Nucleophile; for GATase activity of the active site. The Glutamine amidotransferase type-2 domain maps to 2-217; that stretch reads CGIVGYIGDK…DHEIAIIKKD (216 aa). SIS domains are found at residues 285-424 and 453-598; these read TKED…KKGT and VIQK…VDKP. Residue Lys-603 is the For Fru-6P isomerization activity of the active site.

In terms of assembly, homodimer.

The protein localises to the cytoplasm. It carries out the reaction D-fructose 6-phosphate + L-glutamine = D-glucosamine 6-phosphate + L-glutamate. Its function is as follows. Catalyzes the first step in hexosamine metabolism, converting fructose-6P into glucosamine-6P using glutamine as a nitrogen source. The sequence is that of Glutamine--fructose-6-phosphate aminotransferase [isomerizing] from Caldanaerobacter subterraneus subsp. tengcongensis (strain DSM 15242 / JCM 11007 / NBRC 100824 / MB4) (Thermoanaerobacter tengcongensis).